The primary structure comprises 390 residues: Histamine H4 receptor (390 aa).

Residues 1–19 (MPDTNSTINLSLSTRVTLA) lie on the Extracellular side of the membrane. 2 N-linked (GlcNAc...) asparagine glycosylation sites follow: asparagine 5 and asparagine 9. A helical transmembrane segment spans residues 20–40 (FFMSLVAFAIMLGNALVILAF). Residues 41-52 (VVDKNLRHRSSY) are Cytoplasmic-facing. A helical membrane pass occupies residues 53-73 (FFLNLAISDFFVGVISIPLYI). Residues 74–87 (PHTLFEWDFGKEIC) lie on the Extracellular side of the membrane. The cysteines at positions 87 and 164 are disulfide-linked. Residues 88-108 (VFWLTTDYLLCTASVYNIVLI) form a helical membrane-spanning segment. The Cytoplasmic portion of the chain corresponds to 109–131 (SYDRYLSVSNAVSYRTQHTGVLK). A helical membrane pass occupies residues 132–152 (IVTLMVAVWVLAFLVNGPMIL). Residues 153-172 (VSESWKDEGSECEPGFFSEW) are Extracellular-facing. A helical transmembrane segment spans residues 173-193 (YILAITSFLEFVIPVILVAYF). The Cytoplasmic segment spans residues 194 to 304 (NMNIYWSLWK…LLRARRLAKS (111 aa)). A helical membrane pass occupies residues 305-325 (LAILLGVFAVCWAPYSLFTIV). The Extracellular portion of the chain corresponds to 326–341 (LSFYSSATGPKSVWYR). A helical transmembrane segment spans residues 342-362 (IAFWLQWFNSFVNPLLYPLCH). Residues 363-390 (KRFQKAFLKIFCIKKQPLPSQHSRSVSS) are Cytoplasmic-facing.

Belongs to the G-protein coupled receptor 1 family. Interacts with TSPAN4. Expressed primarily in the bone marrow and eosinophils. Shows preferential distribution in cells of immunological relevance such as T-cells, dendritic cells, monocytes, mast cells, neutrophils. Also expressed in a wide variety of peripheral tissues, including the heart, kidney, liver, lung, pancreas, skeletal muscle, prostate, small intestine, spleen, testis, colon, fetal liver and lymph node.

It is found in the cell membrane. Functionally, the H4 subclass of histamine receptors could mediate the histamine signals in peripheral tissues. Displays a significant level of constitutive activity (spontaneous activity in the absence of agonist). The protein is Histamine H4 receptor (HRH4) of Homo sapiens (Human).